The chain runs to 673 residues: MDLTKMGMIQLQNPSHPTGLLCKANQMRLAGTLCDVVIMVDSQEFHAHRTVLACTSKMFEILFHRNSQHYTLDFLSPKTFQQILEYAYTATLQAKAEDLDDLLYAAEILEIEYLEEQCLKMLETIQASDDNDTEATMADGGAEEEEDRKARYLKNIFISKHSSEESGYASVAGQSLPGPMVDQSPSVSTSFGLSAMSPTKAAVDSLMTIGQSLLQGTLQPPAGPEEPTLAGGGRHPGVAEVKTEMMQVDEVPSQDSPGAAESSISGGMGDKVEERGKEGPGTPTRSSVITSARELHYGREESAEQVPPPAEAGQAPTGRPEHPAPPPEKHLGIYSVLPNHKADAVLSMPSSVTSGLHVQPALAVSMDFSTYGGLLPQGFIQRELFSKLGELAVGMKSESRTIGEQCSVCGVELPDNEAVEQHRKLHSGMKTYGCELCGKRFLDSLRLRMHLLAHSAGAKAFVCDQCGAQFSKEDALETHRQTHTGTDMAVFCLLCGKRFQAQSALQQHMEVHAGVRSYICSECNRTFPSHTALKRHLRSHTGDHPYECEFCGSCFRDESTLKSHKRIHTGEKPYECNGCGKKFSLKHQLETHYRVHTGEKPFECKLCHQRSRDYSAMIKHLRTHNGASPYQCTICTEYCPSLSSMQKHMKGHKPEEIPPDWRIEKTYLYLCYV.

A BTB domain is found at cysteine 34–alanine 96. Residues serine 76, serine 184, and serine 197 each carry the phosphoserine; by PDPK1 modification. The segment at lysine 200 to glutamate 300 is interaction with RUNX1T1. 2 disordered regions span residues glutamine 215 to proline 236 and aspartate 249 to glycine 332. Phosphoserine; by PDPK1 is present on serine 256. Threonine 282 is modified (phosphothreonine; by PDPK1). Composition is skewed to basic and acidic residues over residues arginine 293 to serine 302 and arginine 319 to leucine 331. 8 consecutive C2H2-type zinc fingers follow at residues glutamate 404–histidine 426, tyrosine 432–histidine 454, phenylalanine 461–histidine 483, valine 490–histidine 512, tyrosine 518–histidine 540, tyrosine 546–histidine 568, tyrosine 574–histidine 596, and phenylalanine 602–histidine 624. The residue at position 628 (serine 628) is a Phosphoserine; by PDPK1. A C2H2-type 9 zinc finger spans residues tyrosine 630–histidine 652.

The protein belongs to the krueppel C2H2-type zinc-finger protein family. As to quaternary structure, binds EPN1. Interacts with ZBTB32 and CUL3. Interacts with ATP7B. Interacts with transcriptional corepressor RUNX1T1 (via its N-terminus); the interaction increases the transcription repression activity of ZBTB16. Interacts (via C2H2-type zinc finger domains 1 and 2) with RNF112. As to expression, within the hematopoietic system, PLZF is expressed in bone marrow, early myeloid cell lines and peripheral blood mononuclear cells. Also expressed in the ovary, and at lower levels, in the kidney and lung.

It is found in the nucleus. The protein resides in the nuclear body. Its pathway is protein modification; protein ubiquitination. Its function is as follows. Acts as a transcriptional repressor. Transcriptional repression may be mediated through recruitment of histone deacetylases to target promoters. May play a role in myeloid maturation and in the development and/or maintenance of other differentiated tissues. Probable substrate-recognition component of an E3 ubiquitin-protein ligase complex which mediates the ubiquitination and subsequent proteasomal degradation of target proteins. This chain is Zinc finger and BTB domain-containing protein 16 (ZBTB16), found in Homo sapiens (Human).